The sequence spans 456 residues: 3-isopropylmalate dehydratase large subunit (456 aa).

Residues Cys336, Cys396, and Cys399 each contribute to the [4Fe-4S] cluster site.

It belongs to the aconitase/IPM isomerase family. LeuC type 1 subfamily. As to quaternary structure, heterodimer of LeuC and LeuD. It depends on [4Fe-4S] cluster as a cofactor.

It carries out the reaction (2R,3S)-3-isopropylmalate = (2S)-2-isopropylmalate. It participates in amino-acid biosynthesis; L-leucine biosynthesis; L-leucine from 3-methyl-2-oxobutanoate: step 2/4. In terms of biological role, catalyzes the isomerization between 2-isopropylmalate and 3-isopropylmalate, via the formation of 2-isopropylmaleate. The polypeptide is 3-isopropylmalate dehydratase large subunit (Staphylococcus saprophyticus subsp. saprophyticus (strain ATCC 15305 / DSM 20229 / NCIMB 8711 / NCTC 7292 / S-41)).